The chain runs to 201 residues: Ribosome maturation factor RimP (201 aa).

The protein belongs to the RimP family.

It is found in the cytoplasm. Functionally, required for maturation of 30S ribosomal subunits. This Rhizobium leguminosarum bv. trifolii (strain WSM2304) protein is Ribosome maturation factor RimP.